We begin with the raw amino-acid sequence, 489 residues long: UDP-N-acetylmuramate--L-alanine ligase (489 aa).

128–134 (GTHGKTT) lines the ATP pocket.

It belongs to the MurCDEF family.

The protein resides in the cytoplasm. The catalysed reaction is UDP-N-acetyl-alpha-D-muramate + L-alanine + ATP = UDP-N-acetyl-alpha-D-muramoyl-L-alanine + ADP + phosphate + H(+). The protein operates within cell wall biogenesis; peptidoglycan biosynthesis. In terms of biological role, cell wall formation. This is UDP-N-acetylmuramate--L-alanine ligase from Shewanella halifaxensis (strain HAW-EB4).